Here is a 274-residue protein sequence, read N- to C-terminus: MRSNNNNPLTRDEILSRYFPQYRPAVTASQGLSGGSCIIAHDTHRIVLRRHHDPDAPPAHFLRHHRALSQLPASLAPRALFYTPGWMAVEYLHGVVNSALPDADELAALLYHLHQQPHFGWRIALSPLLAQYWSCCDPARRTPFWLRRLKQLQKNGEPRPLRLAPLHMDVHGDNIVLTSAGLRLIDWEYAGDGDIALELAAVWVEDERQHRQLADAYAARARIDARQLWRQIRLWHPWVIMLKAGWFEYRWRQTGEQQFIRLADETWRQLRMKG.

It belongs to the thiamine kinase family.

It catalyses the reaction thiamine + ATP = thiamine phosphate + ADP + H(+). It functions in the pathway cofactor biosynthesis; thiamine diphosphate biosynthesis; thiamine phosphate from thiamine: step 1/1. Functionally, catalyzes the ATP-dependent phosphorylation of thiamine to thiamine phosphate. Is involved in thiamine salvage. The chain is Thiamine kinase from Salmonella paratyphi A (strain ATCC 9150 / SARB42).